A 360-amino-acid polypeptide reads, in one-letter code: Amine dehydrogenase (360 aa).

It belongs to the amine dehydrogenase family. As to quaternary structure, homodimer.

It catalyses the reaction a secondary alkyl amine + NAD(+) + H2O = a ketone + NH4(+) + NADH + H(+). It carries out the reaction a secondary alkyl amine + NADP(+) + H2O = a ketone + NH4(+) + NADPH + H(+). The enzyme catalyses serinol + NAD(+) + H2O = dihydroxyacetone + NH4(+) + NADH + H(+). The catalysed reaction is serinol + NADP(+) + H2O = dihydroxyacetone + NH4(+) + NADPH + H(+). It catalyses the reaction 2-aminopropan-1-ol + NAD(+) + H2O = hydroxyacetone + NH4(+) + NADH + H(+). It carries out the reaction (R)-1-phenylethylamine + NAD(+) + H2O = acetophenone + NH4(+) + NADH + H(+). The enzyme catalyses (S)-1-phenylethylamine + NAD(+) + H2O = acetophenone + NH4(+) + NADH + H(+). The catalysed reaction is (2S)-2-aminobutan-1-ol + NAD(+) + H2O = 1-hydroxy-2-butanone + NH4(+) + NADH + H(+). It catalyses the reaction (2S)-2-amino-3-methylbutan-1-ol + NAD(+) + H2O = 1-hydroxy-3-methylbutan-2-one + NH4(+) + NADH + H(+). It carries out the reaction 2-aminopentan-1-ol + NAD(+) + H2O = 1-hydroxypentan-2-one + NH4(+) + NADH + H(+). The enzyme catalyses (S)-leucinol + NAD(+) + H2O = 1-hydroxy-4-methylpentan-2-one + NH4(+) + NADH + H(+). The catalysed reaction is (S)-isoleucinol + NAD(+) + H2O = (3S)-1-hydroxy-3-methylpentan-2-one + NH4(+) + NADH + H(+). It catalyses the reaction (S)-methioninol + NAD(+) + H2O = 1-hydroxy-4-(methythio)butan-2-one + NH4(+) + NADH + H(+). It carries out the reaction 2-aminocyclohexanol + NAD(+) + H2O = 2-hydroxycyclohexan-1-one + NH4(+) + NADH + H(+). The enzyme catalyses L-alanine + NAD(+) + H2O = pyruvate + NH4(+) + NADH + H(+). The catalysed reaction is D-alanine + NAD(+) + H2O = pyruvate + NH4(+) + NADH + H(+). It catalyses the reaction L-aspartate + NAD(+) + H2O = oxaloacetate + NH4(+) + NADH + H(+). It carries out the reaction D-aspartate + NAD(+) + H2O = oxaloacetate + NH4(+) + NADH + H(+). The enzyme catalyses L-glutamate + NAD(+) + H2O = 2-oxoglutarate + NH4(+) + NADH + H(+). The catalysed reaction is D-glutamate + NAD(+) + H2O = 2-oxoglutarate + NH4(+) + NADH + H(+). It catalyses the reaction L-serine + NAD(+) + H2O = 3-hydroxypyruvate + NH4(+) + NADH + H(+). It carries out the reaction D-serine + NAD(+) + H2O = 3-hydroxypyruvate + NH4(+) + NADH + H(+). The enzyme catalyses methylamine + NAD(+) + H2O = formaldehyde + NH4(+) + NADH + H(+). The catalysed reaction is ethylamine + NAD(+) + H2O = acetaldehyde + NH4(+) + NADH + H(+). It catalyses the reaction propylamine + NAD(+) + H2O = propanal + NH4(+) + NADH + H(+). It carries out the reaction butylamine + NAD(+) + H2O = butanal + NH4(+) + NADH + H(+). The enzyme catalyses hexylamine + NAD(+) + H2O = hexanal + NH4(+) + NADH + H(+). The catalysed reaction is octylamine + NAD(+) + H2O = octanal + NH4(+) + NADH + H(+). It catalyses the reaction (R)-sec-butylamine + NAD(+) + H2O = butan-2-one + NH4(+) + NADH + H(+). It carries out the reaction (S)-sec-butylamine + NAD(+) + H2O = butan-2-one + NH4(+) + NADH + H(+). The enzyme catalyses 2-aminopentane + NAD(+) + H2O = pentan-2-one + NH4(+) + NADH + H(+). The catalysed reaction is 3-aminopentane + NAD(+) + H2O = pentan-3-one + NH4(+) + NADH + H(+). It catalyses the reaction (2R)-heptan-2-amine + NAD(+) + H2O = heptan-2-one + NH4(+) + NADH + H(+). It carries out the reaction (2S)-heptan-2-amine + NAD(+) + H2O = heptan-2-one + NH4(+) + NADH + H(+). The enzyme catalyses benzylamine + NAD(+) + H2O = benzaldehyde + NH4(+) + NADH + H(+). The catalysed reaction is 3-aminobutan-2-ol + NAD(+) + H2O = acetoin + NH4(+) + NADH + H(+). It catalyses the reaction 3-aminobutan-1-ol + NAD(+) + H2O = 4-hydroxybutan-2-one + NH4(+) + NADH + H(+). It carries out the reaction 5-hydroxypentan-2-amine + NAD(+) + H2O = 5-hydroxypentan-2-one + NH4(+) + NADH + H(+). The enzyme catalyses 4-hydroxyhexan-3-amine + NAD(+) + H2O = 4-hydroxyhexan-3-one + NH4(+) + NADH + H(+). The catalysed reaction is 5-hydroxyoctan-4-amine + NAD(+) + H2O = 5-hydroxyoctan-4-one + NH4(+) + NADH + H(+). It catalyses the reaction 2-hydroxy-1-phenylethan-1-amine + NAD(+) + H2O = 2-hydroxyacetophenone + NH4(+) + NADH + H(+). It carries out the reaction hexan-2-amine + NAD(+) + H2O = hexan-2-one + NH4(+) + NADH + H(+). The enzyme catalyses 4-phenylbutan-2-amine + NAD(+) + H2O = 4-phenylbutan-2-one + NH4(+) + NADH + H(+). Functionally, catalyzes the reversible oxidative deaminations of a broad range of amines, amino alcohols and amino acids. Catalyzes the reversible dehydrogenation of serinol in the presence of NAD(+) to give dihydroxyacetone, ammonium ion and NADH, while NADP(+) shows a slight activity. Is also able to produce 2-amino-1-propanol and aspartate by the reductive amination of the corresponding keto alcohol (hydroxyacetone) and keto acid (oxaloacetate) in the presence of ammonium ions and NADH, and that of acetophenone from phenylethylamine by the oxidative deamination in the presence of NAD(+). The polypeptide is Amine dehydrogenase (Streptomyces virginiae (Streptomyces cinnamonensis)).